A 262-amino-acid chain; its full sequence is Small ribosomal subunit protein uS2 (262 aa).

The interval 224–246 (GNQGEDQDDAQEQQVAADKKADS) is disordered.

The protein belongs to the universal ribosomal protein uS2 family.

The chain is Small ribosomal subunit protein uS2 from Lacticaseibacillus casei (strain BL23) (Lactobacillus casei).